Consider the following 490-residue polypeptide: Betaine aldehyde dehydrogenase (490 aa).

S26, I27, and D93 together coordinate K(+). 150–152 is a binding site for NAD(+); the sequence is GAW. K162 (charge relay system) is an active-site residue. 176–179 contributes to the NAD(+) binding site; the sequence is KPSE. V180 provides a ligand contact to K(+). Residue 230-233 coordinates NAD(+); sequence GTDT. Position 246 (L246) interacts with K(+). The active-site Proton acceptor is E252. NAD(+) is bound by residues G254, C286, and E387. The active-site Nucleophile is the C286. Residue C286 is modified to Cysteine sulfenic acid (-SOH). Residues K457 and G460 each coordinate K(+). E464 acts as the Charge relay system in catalysis.

The protein belongs to the aldehyde dehydrogenase family. In terms of assembly, dimer of dimers. Requires K(+) as cofactor.

It catalyses the reaction betaine aldehyde + NAD(+) + H2O = glycine betaine + NADH + 2 H(+). It participates in amine and polyamine biosynthesis; betaine biosynthesis via choline pathway; betaine from betaine aldehyde: step 1/1. In terms of biological role, involved in the biosynthesis of the osmoprotectant glycine betaine. Catalyzes the irreversible oxidation of betaine aldehyde to the corresponding acid. This is Betaine aldehyde dehydrogenase from Pseudomonas syringae pv. tomato (strain ATCC BAA-871 / DC3000).